Here is a 688-residue protein sequence, read N- to C-terminus: Methionine--tRNA ligase (688 aa).

The short motif at P20 to H30 is the 'HIGH' region element. Zn(2+)-binding residues include C151, C154, C164, and C167. Positions K337 to S341 match the 'KMSKS' region motif. K340 is a binding site for ATP. The region spanning T587–M688 is the tRNA-binding domain.

This sequence belongs to the class-I aminoacyl-tRNA synthetase family. MetG type 1 subfamily. In terms of assembly, homodimer. Requires Zn(2+) as cofactor.

It is found in the cytoplasm. It carries out the reaction tRNA(Met) + L-methionine + ATP = L-methionyl-tRNA(Met) + AMP + diphosphate. Its function is as follows. Is required not only for elongation of protein synthesis but also for the initiation of all mRNA translation through initiator tRNA(fMet) aminoacylation. This chain is Methionine--tRNA ligase, found in Vibrio parahaemolyticus serotype O3:K6 (strain RIMD 2210633).